The primary structure comprises 108 residues: UPF0145 protein MADE_1007770 (108 aa).

It belongs to the UPF0145 family.

The sequence is that of UPF0145 protein MADE_1007770 from Alteromonas mediterranea (strain DSM 17117 / CIP 110805 / LMG 28347 / Deep ecotype).